The chain runs to 217 residues: Serine acetyltransferase (217 aa).

It belongs to the transferase hexapeptide repeat family.

It is found in the cytoplasm. The catalysed reaction is L-serine + acetyl-CoA = O-acetyl-L-serine + CoA. The protein operates within amino-acid biosynthesis; L-cysteine biosynthesis; L-cysteine from L-serine: step 1/2. With respect to regulation, inhibited by cysteine. Catalyzes the acetylation of serine by acetyl-CoA to produce O-acetylserine (OAS). This is Serine acetyltransferase (cysE) from Bacillus subtilis (strain 168).